Here is a 1018-residue protein sequence, read N- to C-terminus: Cell wall protein 1 (1018 aa).

An N-terminal signal peptide occupies residues 1-17; it reads MLPSIVISIVLASFVSA. The CFEM 1 domain maps to 32–143; it reads NPYTIYPSVA…SSLSAAATAV (112 aa). Intrachain disulfides connect Cys-60–Cys-100, Cys-64–Cys-95, Cys-74–Cys-81, and Cys-83–Cys-116. A heme-binding site is contributed by Asp-78. The tract at residues 147–227 is disordered; the sequence is SEQPVETSSE…STPEDNPYTI (81 aa). Over residues 148–164 the composition is skewed to polar residues; it reads EQPVETSSEPAGSSQSV. The segment covering 165 to 221 has biased composition (low complexity); the sequence is ESSQPAETSSSEPAETSSSEPAETSSETSSEQPASSEPAETSSEESSTITSAPSTPE. 2 CFEM domains span residues 223–334 and 393–504; these read NPYT…ATAV and SSSS…ATAV. Cystine bridges form between Cys-251–Cys-291, Cys-255–Cys-286, Cys-265–Cys-272, and Cys-274–Cys-307. Asp-269 is a heme binding site. Positions 338–396 are disordered; that stretch reads SEQSVETSSESAESSQSVESSQPAETSSEQPSETSSETSSQQLSSITSAPDSSATSSSS. 4 disulfides stabilise this stretch: Cys-421–Cys-461, Cys-425–Cys-456, Cys-435–Cys-442, and Cys-444–Cys-477. Position 439 (Asp-439) interacts with heme. The tract at residues 507 to 557 is disordered; the sequence is SDSASETASQEPSETSSEQPSETASQQPAETSSEESSTITSAPSTPEDNPY. Over residues 509–553 the composition is skewed to low complexity; sequence SASETASQEPSETSSEQPSETASQQPAETSSEESSTITSAPSTPE. The region spanning 555–666 is the CFEM 4 domain; sequence NPYTIYPSVA…SSLNAAATAV (112 aa). Intrachain disulfides connect Cys-583/Cys-623, Cys-587/Cys-618, Cys-597/Cys-604, and Cys-606/Cys-639. Asp-601 lines the heme pocket. Positions 677–785 are disordered; sequence SASESASQVP…STSTKSDAAS (109 aa). The span at 690 to 766 shows a compositional bias: low complexity; the sequence is SAASSQSANN…AISESVAPSS (77 aa). Residues Asn-698, Asn-708, Asn-718, Asn-729, Asn-743, Asn-753, Asn-769, Asn-798, and Asn-965 are each glycosylated (N-linked (GlcNAc...) asparagine). Over residues 767 to 785 the composition is skewed to polar residues; that stretch reads YGNSTIAQPSTSTKSDAAS. Residue Ser-989 is the site of GPI-anchor amidated serine attachment. A propeptide spans 990-1018 (removed in mature form); it reads VAIANMANTKFASTMSLLVASFVFVGLFI.

It belongs to the RBT5 family. Post-translationally, the GPI-anchor is attached to the protein in the endoplasmic reticulum and serves to target the protein to the cell surface. There, the glucosamine-inositol phospholipid moiety is cleaved off and the GPI-modified mannoprotein is covalently attached via its lipidless GPI glycan remnant to the 1,6-beta-glucan of the outer cell wall layer.

It is found in the secreted. Its subcellular location is the cell wall. The protein localises to the membrane. Its function is as follows. Heme-binding protein involved in heme-iron utilization. The ability to acquire iron from host tissues is a major virulence factor of pathogenic microorganisms. Required for biofilm formation. The polypeptide is Cell wall protein 1 (CSA1) (Candida albicans (strain SC5314 / ATCC MYA-2876) (Yeast)).